The chain runs to 424 residues: Protein shisa-9 (424 aa).

An N-terminal signal peptide occupies residues 1-23 (MRRVLRLLLGCFLTELCARVCRA). Over 24-149 (QERAGHGQLA…DPLHDPTKDK (126 aa)) the chain is Extracellular. N-linked (GlcNAc...) asparagine glycans are attached at residues Asn-45, Asn-89, and Asn-116. Residues 150 to 170 (TNLIVYIICGVVAVMVLVGIF) form a helical membrane-spanning segment. The Cytoplasmic segment spans residues 171–424 (TKLGLEKAHR…ITNSKTEVTV (254 aa)). The tract at residues 333–424 (PRAFSPEHGP…ITNSKTEVTV (92 aa)) is disordered. The segment covering 414 to 424 (FITNSKTEVTV) has biased composition (polar residues).

It belongs to the shisa family. SHISA9 subfamily. Component of some AMPA receptors (ionotropic glutamate receptors) complex, at least composed of some AMPA receptor (GRIA1, GRIA2 and/or GRIA3), CACNG2 and SHISA9, as well as low level of DLG4.

The protein localises to the cell projection. It localises to the dendritic spine membrane. Its subcellular location is the synapse. In terms of biological role, regulator of short-term neuronal synaptic plasticity in the dentate gyrus. Associates with AMPA receptors (ionotropic glutamate receptors) in synaptic spines and promotes AMPA receptor desensitization at excitatory synapses. The chain is Protein shisa-9 (SHISA9) from Homo sapiens (Human).